Here is a 314-residue protein sequence, read N- to C-terminus: MTKSQRLQVAIIGSGNIGTDLMIKVMRNSKHLSMGAMVGIDAASDGLARAGRLGVPVTHEGITGLVGLPNFGDIRIAFDATSAGAHAGHNEVLQRHGVKVIDLTPAAIGPYVIPVVNLEEQLSSPNINMVTCGGQATIPIVRAVSQIARVRYAEIVASIASKSAGPGTRANIDEFTETTSAAIVSVGRAEHGKAIIVLNPAEPSLMMRDTVFCLVDADADQEAIRLSVRDMVRSVAAYVPGYRLKQDVQFDVIPDKAPVNVPGIGRVSGLKVSVFLEVEGAAHYLPAYAGNLDIMTSAALAAADKIAASLITAR.

14 to 17 (SGNI) contacts NAD(+). Residue cysteine 132 is the Acyl-thioester intermediate of the active site. Residues 163-171 (SAGPGTRAN) and asparagine 291 each bind NAD(+).

Belongs to the acetaldehyde dehydrogenase family.

The catalysed reaction is acetaldehyde + NAD(+) + CoA = acetyl-CoA + NADH + H(+). The chain is Acetaldehyde dehydrogenase from Polaromonas sp. (strain JS666 / ATCC BAA-500).